Reading from the N-terminus, the 374-residue chain is 5-aminosalicylate 1,2-dioxygenase (374 aa).

The protein belongs to the gentisate 1,2-dioxygenase family. Requires Fe(2+) as cofactor.

It catalyses the reaction 5-amino-2-hydroxybenzoate + O2 = (2Z,4E)-4-amino-6-oxohepta-2,4-dienedioate + H(+). With respect to regulation, inhibited by SDS and o-phenanthroline, a ferrous iron chelator. Partially inhibited by EDTA. Functionally, involved in the biodegradation of 3-aminobenzoate. Catalyzes the cleavage of the 5-aminosalicylate (5ASA) aromatic ring to form 4-amino-6-oxohepta-2,4-dienedioate (cis-ACOHDA). Can also convert gentisate, but the catalytic efficiency with 5ASA is 70-fold higher. This Comamonas sp protein is 5-aminosalicylate 1,2-dioxygenase.